A 301-amino-acid polypeptide reads, in one-letter code: Fluoroquinolones export ATP-binding protein Rv2688c (301 aa).

Residues 18-246 (IRVRGLTFRY…RSRRRVRVEY (229 aa)) form the ABC transporter domain. An ATP-binding site is contributed by 52–59 (GPSGAGKS).

Belongs to the ABC transporter superfamily. The complex is composed of 2 ATP-binding proteins (Rv2688c) and 2 transmembrane proteins (Rv2686c and Rv2687c).

Its subcellular location is the cell membrane. Its activity is regulated as follows. Inhibited by reserpine and verapamil. Its function is as follows. Part of the ABC transporter complex Rv2686c/Rv2687c/Rv2688c involved in fluoroquinolones export. Confers resistance to ciprofloxacin and, to a lesser extent, norfloxacin, moxifloxacin and sparfloxacin. Probably responsible for energy coupling to the transport system. This Mycobacterium tuberculosis (strain ATCC 25618 / H37Rv) protein is Fluoroquinolones export ATP-binding protein Rv2688c.